Consider the following 181-residue polypeptide: Ribonuclease M5 (181 aa).

One can recognise a Toprim domain in the interval 3-86; sequence KEVIVVEGRD…AYISQEEGTK (84 aa). Residues glutamate 9, aspartate 55, and aspartate 57 each coordinate Mg(2+).

The protein belongs to the ribonuclease M5 family. Mg(2+) serves as cofactor.

Its subcellular location is the cytoplasm. The catalysed reaction is Endonucleolytic cleavage of RNA, removing 21 and 42 nucleotides, respectively, from the 5'- and 3'-termini of a 5S-rRNA precursor.. In terms of biological role, required for correct processing of both the 5' and 3' ends of 5S rRNA precursor. Cleaves both sides of a double-stranded region yielding mature 5S rRNA in one step. The chain is Ribonuclease M5 from Clostridium botulinum (strain Hall / ATCC 3502 / NCTC 13319 / Type A).